The chain runs to 387 residues: Galactokinase (387 aa).

Position 32-35 (32-35 (EHTD)) interacts with substrate. Residues S66 and 123 to 129 (GAGLSSS) contribute to the ATP site. Positions 129 and 161 each coordinate Mg(2+). D173 acts as the Proton acceptor in catalysis. Y223 lines the substrate pocket.

Belongs to the GHMP kinase family. GalK subfamily.

The protein resides in the cytoplasm. It catalyses the reaction alpha-D-galactose + ATP = alpha-D-galactose 1-phosphate + ADP + H(+). It participates in carbohydrate metabolism; galactose metabolism. In terms of biological role, catalyzes the transfer of the gamma-phosphate of ATP to D-galactose to form alpha-D-galactose-1-phosphate (Gal-1-P). The protein is Galactokinase of Enterococcus faecalis (strain ATCC 700802 / V583).